The following is a 1324-amino-acid chain: Coiled-coil domain-containing protein 171 (1324 aa).

Coiled-coil stretches lie at residues K29 to H296, A325 to Y393, F453 to D521, S599 to N712, and F981 to V1145. Positions P1301–V1312 are enriched in polar residues. Residues P1301–L1324 form a disordered region.

This Mus musculus (Mouse) protein is Coiled-coil domain-containing protein 171 (Ccdc171).